Consider the following 512-residue polypeptide: Bifunctional purine biosynthesis protein PurH (512 aa).

Residues 1–144 (MKRALVSVSD…KNYRDVVVVV (144 aa)) form the MGS-like domain.

This sequence belongs to the PurH family.

The catalysed reaction is (6R)-10-formyltetrahydrofolate + 5-amino-1-(5-phospho-beta-D-ribosyl)imidazole-4-carboxamide = 5-formamido-1-(5-phospho-D-ribosyl)imidazole-4-carboxamide + (6S)-5,6,7,8-tetrahydrofolate. The enzyme catalyses IMP + H2O = 5-formamido-1-(5-phospho-D-ribosyl)imidazole-4-carboxamide. It functions in the pathway purine metabolism; IMP biosynthesis via de novo pathway; 5-formamido-1-(5-phospho-D-ribosyl)imidazole-4-carboxamide from 5-amino-1-(5-phospho-D-ribosyl)imidazole-4-carboxamide (10-formyl THF route): step 1/1. The protein operates within purine metabolism; IMP biosynthesis via de novo pathway; IMP from 5-formamido-1-(5-phospho-D-ribosyl)imidazole-4-carboxamide: step 1/1. This is Bifunctional purine biosynthesis protein PurH from Ligilactobacillus salivarius (strain UCC118) (Lactobacillus salivarius).